The following is a 254-amino-acid chain: 3-deoxy-manno-octulosonate cytidylyltransferase (254 aa).

It belongs to the KdsB family.

It localises to the cytoplasm. It carries out the reaction 3-deoxy-alpha-D-manno-oct-2-ulosonate + CTP = CMP-3-deoxy-beta-D-manno-octulosonate + diphosphate. The protein operates within nucleotide-sugar biosynthesis; CMP-3-deoxy-D-manno-octulosonate biosynthesis; CMP-3-deoxy-D-manno-octulosonate from 3-deoxy-D-manno-octulosonate and CTP: step 1/1. It functions in the pathway bacterial outer membrane biogenesis; lipopolysaccharide biosynthesis. Functionally, activates KDO (a required 8-carbon sugar) for incorporation into bacterial lipopolysaccharide in Gram-negative bacteria. This is 3-deoxy-manno-octulosonate cytidylyltransferase from Polynucleobacter necessarius subsp. necessarius (strain STIR1).